The sequence spans 420 residues: ATP phosphoribosyltransferase regulatory subunit (420 aa).

The protein belongs to the class-II aminoacyl-tRNA synthetase family. HisZ subfamily. In terms of assembly, heteromultimer composed of HisG and HisZ subunits.

Its subcellular location is the cytoplasm. It participates in amino-acid biosynthesis; L-histidine biosynthesis; L-histidine from 5-phospho-alpha-D-ribose 1-diphosphate: step 1/9. Functionally, required for the first step of histidine biosynthesis. May allow the feedback regulation of ATP phosphoribosyltransferase activity by histidine. The chain is ATP phosphoribosyltransferase regulatory subunit from Bacillus anthracis (strain A0248).